The following is a 521-amino-acid chain: Cytochrome P450 monooxygenase gloO (521 aa).

Residues 1–26 form the signal peptide; the sequence is MIAALFTTNLQLGAVGVFIFALLAFA. Cys464 is a binding site for heme.

The protein belongs to the cytochrome P450 family. Heme serves as cofactor.

The protein operates within mycotoxin biosynthesis. In terms of biological role, cytochrome P450 monooxygenase; part of the gene cluster that mediates the biosynthesis of pneumocandins, lipohexapeptides of the echinocandin family that prevent fungal cell wall formation by non-competitive inhibition of beta-1,3-glucan synthase. The 10,12-dimethylmyristoyl side chain is synthesized by the reducing polyketide synthase gloL/GLPKS4. The thioesterase gloN/GLHYD exclusively interacts with gloL/GLPKS4 to maintain turnover of the polyketide side chain. The 10R,12S-dimethylmyristic acid is then transferred to the first thiolation domain of the nonribosomal peptide synthetase gloA/GLNRPS4 by the acyl-AMP ligase gloD/GLligase, followed by its acylation to L-ornithine to trigger elongation of the cyclic hexapeptide. L-ornithine, 4R-hydroxyl-L-proline (generated from L-proline by the dioxygenase gloF/GLOXY2), 3S-hydroxyl-L-homotyrosine (generated by gloG/GLHtyB, gloH/GLHtyA, gloI/GLHtyC, gloJ/GLHtyD and hydroxylated at C-3 by the dioxygenase gloM/GLOXY1), 3R-hydroxyl-L-glutamine (generated from L-glutamine probably by the dioxygenase gloE/GLOXY3) and 3S-hydroxyl-L-proline (generated from L-proline by the dioxygenase gloF/GLOXY2 to yield pneumocandin B0), or 3S-hydroxyl-4S-methyl-L-proline (generated from L-leucine by the dioxygenase gloC/GLOXY4 to yield pneumocandin A0) are sequentially added to the growing chain. The last C domain of gloA/GLNRPS4 is proposed to be responsible for cyclization by condensation to form the peptide bond between L-ornithine and 3S-hydroxyl-4S-methyl-L-proline (for pneumocandin A0) or 3S-hydroxyl-L-proline (for pneumocandin B0). Finally, the subsequent C-4 hydroxylation of 3S-hydroxyl-L-homotyrosine and L-ornithine dihydroxylation at C-4 and C-5 are performed by the cytochrome P450 monooxygenases gloP/GLP450-1 and gloO/GLP450-2, respectively. The protein is Cytochrome P450 monooxygenase gloO of Glarea lozoyensis (strain ATCC 20868 / MF5171).